Consider the following 379-residue polypeptide: MKYSTIFSAAAAVFAGSAAAVGVSGSAEGFAEGVTGGGDATPVYPDTIDELVSYLGDDEARVIVLTKTFDFTDSEGTTTGTGCAPWGTASACQVAIDQDDWCENYEPDAPSISVEYYNAGVLGITVTSNKSLIGEGSSGAIKGKGLRIVSGAENIIIQNIAVTDINPKYVWGGDAITLDDCDLVWIDHVTTARIGRQHYVLGTSADNRVSLTNNYIDGVSDYSATCDGYHYWGIYLDGDADLVTMKGNYIYHTSGRSPKVQDNTLLHCVNNYFYDISGHAFEIGEGGYVLAEGNVFQNVDTVLETYEGAAFTVPSTTAGEVCSTYLGRDCVINGFGSSGTFSEDSTSFLSDFEGKNIASASAYTSVASSVVANAGQGNL.

The first 20 residues, 1-20 (MKYSTIFSAAAAVFAGSAAA), serve as a signal peptide directing secretion. 2 cysteine pairs are disulfide-bonded: C83/C102 and C92/C226. A glycan (N-linked (GlcNAc...) asparagine) is linked at N129. R256 is a catalytic residue. An intrachain disulfide couples C322 to C330.

This sequence belongs to the polysaccharide lyase 1 family.

It localises to the secreted. It carries out the reaction Eliminative cleavage of (1-&gt;4)-alpha-D-galacturonan methyl ester to give oligosaccharides with 4-deoxy-6-O-methyl-alpha-D-galact-4-enuronosyl groups at their non-reducing ends.. Functionally, pectinolytic enzymes consist of four classes of enzymes: pectin lyase, polygalacturonase, pectin methylesterase and rhamnogalacturonase. Among pectinolytic enzymes, pectin lyase is the most important in depolymerization of pectin, since it cleaves internal glycosidic bonds of highly methylated pectins. The chain is Probable pectin lyase A (pelA) from Aspergillus niger (strain ATCC MYA-4892 / CBS 513.88 / FGSC A1513).